The following is a 379-amino-acid chain: L-lactate dehydrogenase (379 aa).

The region spanning 1-379 is the FMN hydroxy acid dehydrogenase domain; it reads MIISASTDYR…LSRDSLVKIP (379 aa). A substrate-binding site is contributed by Tyr24. Residues Ser106 and Gln127 each coordinate FMN. Position 129 (Tyr129) interacts with substrate. Residue Thr155 participates in FMN binding. Arg164 is a binding site for substrate. Position 251 (Lys251) interacts with FMN. Residue His275 is the Proton acceptor of the active site. Arg278 is a binding site for substrate. Residue 306–330 coordinates FMN; sequence DSGIRTGLDVVRMLALGADCTLLGR.

The protein belongs to the FMN-dependent alpha-hydroxy acid dehydrogenase family. It depends on FMN as a cofactor.

Its subcellular location is the cell inner membrane. It catalyses the reaction (S)-lactate + A = pyruvate + AH2. Functionally, catalyzes the conversion of L-lactate to pyruvate. Is coupled to the respiratory chain. The sequence is that of L-lactate dehydrogenase from Vibrio parahaemolyticus serotype O3:K6 (strain RIMD 2210633).